An 860-amino-acid polypeptide reads, in one-letter code: Anoctamin-7 (860 aa).

Topologically, residues 1 to 297 are cytoplasmic; sequence MLRKQAGEED…YFAWLGFYTG (297 aa). A disordered region spans residues 24–50; the sequence is NGCSYGSTAQASEAGKQQVAPSRVGSS. A helical transmembrane segment spans residues 298–318; it reads WLLPAAVVGTVVFLAGCFLVF. The Extracellular segment spans residues 319–362; it reads SDVPTQELCHSSDTFDMCPLCSDCSFWLLSSACTLAQAGRLFDH. A helical transmembrane segment spans residues 363–383; the sequence is GGTVFFSLFMALWAVLLLEYW. Topologically, residues 384-441 are cytoplasmic; that stretch reads KRKNATLAYRWDCSDYEDIEERPRPQFAATAPMTALNPITGEDEPYFPEKNRVRRMLA. Residues 442–462 traverse the membrane as a helical segment; that stretch reads GSVVLLMMVAVVIMCLVSIIL. The Extracellular segment spans residues 463–492; sequence YRAVMAIIVSKSNNAFLSAWASRIASLTGS. The chain crosses the membrane as a helical span at residues 493–513; it reads VVNLVFILILSKVYVILAQVL. Residues 514–530 are Cytoplasmic-facing; that stretch reads TRWEMHRTQTAFEDAFT. Residues 531 to 551 form a helical membrane-spanning segment; it reads LKVFIFQFVNFYASPVYIAFF. Topologically, residues 552–652 are extracellular; the sequence is KGRFVGYPGN…FHEYLEMVLQ (101 aa). The chain crosses the membrane as a helical span at residues 653 to 673; the sequence is FGFVTIFVAACPLAPLFALLN. At 674-701 the chain is on the cytoplasmic side; it reads NWVEIRLDARKFVCEYRRPVAERAQDIG. The chain crosses the membrane as a helical span at residues 702-722; the sequence is IWFHILAGLTHLAVISNAFLL. Residues 723 to 779 lie on the Extracellular side of the membrane; sequence AFSSDFLPRVYYSWTRAPDLRGFLNFTLARAPPTFTSAHNRTCRYRAFRDDDGHYSP. Asn747 and Asn762 each carry an N-linked (GlcNAc...) asparagine glycan. Residues 780 to 800 form a helical membrane-spanning segment; the sequence is TYWTLLAIRLAFVIVFEHVVF. The Cytoplasmic portion of the chain corresponds to 801-860; the sequence is STGRFLDLLVPDIPESVEIKVKREYYLAKQALADNEALLGATGVKGEQPPSSEPSLGLPA.

This sequence belongs to the anoctamin family.

It is found in the cell membrane. The protein resides in the endoplasmic reticulum. It carries out the reaction a 1,2-diacyl-sn-glycero-3-phospho-L-serine(in) = a 1,2-diacyl-sn-glycero-3-phospho-L-serine(out). The enzyme catalyses a beta-D-galactosyl-(1&lt;-&gt;1')-N-acylsphing-4-enine(out) = a beta-D-galactosyl-(1&lt;-&gt;1')-N-acylsphing-4-enine(in). It catalyses the reaction a 1,2-diacyl-sn-glycero-3-phosphocholine(in) = a 1,2-diacyl-sn-glycero-3-phosphocholine(out). Functionally, has calcium-dependent phospholipid scramblase activity; scrambles phosphatidylserine, phosphatidylcholine and galactosylceramide. Does not exhibit calcium-activated chloride channel (CaCC) activity. May play a role in cell-cell interactions. The polypeptide is Anoctamin-7 (Ano7) (Rattus norvegicus (Rat)).